The primary structure comprises 143 residues: uncharacterized protein (143 aa).

The N-terminal stretch at 1–24 (MKKMLMLAFTFLLALTIHVGEASA) is a signal peptide.

This is an uncharacterized protein from Bacillus subtilis (strain 168).